The following is a 347-amino-acid chain: Galactoside alpha-(1,2)-fucosyltransferase 2 (347 aa).

Residues 1–5 (MASAQ) lie on the Cytoplasmic side of the membrane. The chain crosses the membrane as a helical; Signal-anchor for type II membrane protein span at residues 6–26 (VPFSFPLAHFLIFVFVTSTII). Residues 27–347 (HLQQRIVKLQ…PADLSPLLKH (321 aa)) lie on the Lumenal side of the membrane. Asn-192, Asn-258, Asn-286, and Asn-312 each carry an N-linked (GlcNAc...) asparagine glycan.

It belongs to the glycosyltransferase 11 family. Expressed in stomach, colon, ovary and uterus, specifically in luminal uterine epithelium. Expressed in various tissues including heart, liver, kidney, testis, epididymis, small intestine,and cecum. Expressed in duodenum, jejunum and ileum.

Its subcellular location is the golgi apparatus. It localises to the golgi stack membrane. It carries out the reaction a beta-D-galactosyl-(1-&gt;3)-N-acetyl-beta-D-glucosaminyl derivative + GDP-beta-L-fucose = an alpha-L-Fuc-(1-&gt;2)-beta-D-Gal-(1-&gt;3)-beta-D-GlcNAc derivative + GDP + H(+). The enzyme catalyses a beta-D-galactosyl-(1-&gt;4)-N-acetyl-beta-D-glucosaminyl derivative + GDP-beta-L-fucose = an alpha-L-Fuc-(1-&gt;2)-beta-D-Gal-(1-&gt;4)-beta-D-GlcNAc derivative + GDP + H(+). It catalyses the reaction a neolactoside nLc4Cer + GDP-beta-L-fucose = a neolactoside IV(2)-alpha-Fuc-nLc4Cer + GDP + H(+). The catalysed reaction is a neolactoside nLc4Cer(d18:1(4E)) + GDP-beta-L-fucose = a neolactoside IV(2)-alpha-Fuc-nLc4Cer(d18:1(4E)) + GDP + H(+). It carries out the reaction a ganglioside GM1 + GDP-beta-L-fucose = a ganglioside Fuc-GM1 + GDP + H(+). The enzyme catalyses a ganglioside GA1 + GDP-beta-L-fucose = a ganglioside Fuc-GA1 + GDP + H(+). It catalyses the reaction Lc4Cer + GDP-beta-L-fucose = alpha-L-fucosyl-(1-&gt;2)-beta-D-galactosyl-(1-&gt;3)-N-acetyl-beta-D-glucosaminyl-(1-&gt;3)-beta-D-galactosyl-(1-&gt;4)-beta-D-glucosyl-(1&lt;-&gt;1')-ceramide + GDP + H(+). The catalysed reaction is a beta-D-Gal-(1-&gt;3)-beta-D-GlcNAc-(1-&gt;3)-beta-D-Gal-(1-&gt;4)-beta-D-Glc-(1&lt;-&gt;1')-Cer(d18:1(4E)) + GDP-beta-L-fucose = alpha-L-fucosyl-(1-&gt;2)- beta-D-galactosyl-(1-&gt;3)-N-acetyl-beta-D-glucosaminyl-(1-&gt;3)-beta-D-galactosyl-(1-&gt;4)-beta-D-glucosyl-(1&lt;-&gt;1')-N-acylsphing-4-enine + GDP + H(+). It carries out the reaction a ganglioside GD1b + GDP-beta-L-fucose = a ganglioside Fuc-GD1b + GDP + H(+). The enzyme catalyses a ganglioside GM1 (d18:1(4E)) + GDP-beta-L-fucose = a ganglioside Fuc-GM1 (d18:1(4E)) + GDP + H(+). It catalyses the reaction a globoside GalGb4Cer (d18:1(4E)) + GDP-beta-L-fucose = a globoside Globo-H (d18:1(4E)) + GDP + H(+). The catalysed reaction is a lactoside III(4)-a-Fuc-Lc4Cer + GDP-beta-L-fucose = a lactoside IV(2),III(4)-a-[Fuc]2-Lc4Cer + GDP + H(+). It carries out the reaction beta-D-galactosyl-(1-&gt;3)-N-acetyl-D-galactosamine + GDP-beta-L-fucose = alpha-L-fucosyl-(1-&gt;2)-beta-D-galactosyl-(1-&gt;3)-N-acetyl-D-galactosamine + GDP + H(+). It participates in protein modification; protein glycosylation. Functionally, catalyzes the transfer of L-fucose, from a guanosine diphosphate-beta-L-fucose, to the terminal galactose on both O- and N-linked glycans chains of cell surface glycoproteins and glycolipids and the resulting epitope regulates several processes such as cell-cell interaction including host-microbe interaction, cell surface expression and cell proliferation. Preferentially fucosylates gangliosides GA1 and GM1 in the antrum, cecum and colon and in the female reproductive organs. Fucosylated host glycoproteins or glycolipids mediate interaction with intestinal microbiota influencing its composition. Creates a soluble precursor oligosaccharide FuC-alpha ((1,2)Galbeta-) called the H antigen which is an essential substrate for the final step in the soluble ABO blood group antigen synthesis pathway. The protein is Galactoside alpha-(1,2)-fucosyltransferase 2 of Mus musculus (Mouse).